The following is a 218-amino-acid chain: tRNA (guanine-N(7)-)-methyltransferase (218 aa).

Residues 1–25 (MRLKNKPWANELVEEHPESALDRPN) are disordered. The span at 13–25 (VEEHPESALDRPN) shows a compositional bias: basic and acidic residues. The S-adenosyl-L-methionine site is built by Glu45, Glu70, Asp97, and Asp119. Asp119 is a catalytic residue. A substrate-binding site is contributed by Lys123. The interaction with RNA stretch occupies residues 125–130 (RHEKRR). Substrate is bound by residues Asp155 and 195 to 198 (TEYE).

Belongs to the class I-like SAM-binding methyltransferase superfamily. TrmB family.

The catalysed reaction is guanosine(46) in tRNA + S-adenosyl-L-methionine = N(7)-methylguanosine(46) in tRNA + S-adenosyl-L-homocysteine. It functions in the pathway tRNA modification; N(7)-methylguanine-tRNA biosynthesis. In terms of biological role, catalyzes the formation of N(7)-methylguanine at position 46 (m7G46) in tRNA. The sequence is that of tRNA (guanine-N(7)-)-methyltransferase from Lactobacillus delbrueckii subsp. bulgaricus (strain ATCC BAA-365 / Lb-18).